Reading from the N-terminus, the 570-residue chain is Nucleoprotein (570 aa).

The binding site for the cap structure m7GTP stretch occupies residues 54 to 241 (MRKEKRDDSD…IEPKKSAINI (188 aa)). The Mn(2+) site is built by Asp390 and Glu392. Zn(2+)-binding residues include Glu400, Cys507, His510, and Cys530. Mn(2+) is bound at residue Asp534.

This sequence belongs to the arenaviridae nucleocapsid protein family. As to quaternary structure, homomultimerizes to form the nucleocapsid. Binds to viral genomic RNA. Interacts with glycoprotein G2. Interacts with protein Z; this interaction probably directs the encapsidated genome to budding sites. Interacts with protein L; this interaction does not interfere with Z-L interaction. Interacts with host IKBKE (via Protein kinase domain); the interaction inhibits IKBKE kinase activity.

It is found in the virion. It localises to the host cytoplasm. Functionally, encapsidates the genome, protecting it from nucleases. The encapsidated genomic RNA is termed the nucleocapsid (NC). Serves as template for viral transcription and replication. The increased presence of protein N in host cell does not seem to trigger the switch from transcription to replication as observed in other negative strain RNA viruses. Through the interaction with host IKBKE, strongly inhibits the phosphorylation and nuclear translocation of host IRF3, a protein involved in interferon activation pathway, leading to the inhibition of interferon-beta and IRF3-dependent promoters activation. Also encodes a functional 3'-5' exoribonuclease that degrades preferentially dsRNA substrates and thereby participates in the suppression of interferon induction. The sequence is that of Nucleoprotein from Mopeia virus (MOPV).